We begin with the raw amino-acid sequence, 351 residues long: Inhibin beta C chain (351 aa).

The first 18 residues, 1 to 18 (MASSLLLALLFLTLATVV), serve as a signal peptide directing secretion. A propeptide spanning residues 19 to 236 (NLKTDGPCPA…EGKHRVRRRG (218 aa)) is cleaved from the precursor. 3 N-linked (GlcNAc...) asparagine glycosylation sites follow: Asn110, Asn142, and Asn160. 4 disulfide bridges follow: Cys239–Cys247, Cys246–Cys316, Cys275–Cys348, and Cys279–Cys350.

This sequence belongs to the TGF-beta family. In terms of assembly, homodimeric or heterodimeric through association with alpha and beta subunits, linked by one or more disulfide bonds. Inhibins are heterodimers of one alpha and one beta subunit. Activins are homo- or heterodimers of beta subunits only.

It is found in the secreted. Inhibins and activins inhibit and activate, respectively, the secretion of follitropin by the pituitary gland. Inhibins/activins are involved in regulating a number of diverse functions such as hypothalamic and pituitary hormone secretion, gonadal hormone secretion, germ cell development and maturation, erythroid differentiation, insulin secretion, nerve cell survival, embryonic axial development or bone growth, depending on their subunit composition. Inhibins appear to oppose the functions of activins. This is Inhibin beta C chain (Inhbc) from Rattus norvegicus (Rat).